A 331-amino-acid chain; its full sequence is Phenylalanine--tRNA ligase alpha subunit (331 aa).

Glutamate 252 provides a ligand contact to Mg(2+).

It belongs to the class-II aminoacyl-tRNA synthetase family. Phe-tRNA synthetase alpha subunit type 1 subfamily. As to quaternary structure, tetramer of two alpha and two beta subunits. Requires Mg(2+) as cofactor.

The protein resides in the cytoplasm. The enzyme catalyses tRNA(Phe) + L-phenylalanine + ATP = L-phenylalanyl-tRNA(Phe) + AMP + diphosphate + H(+). This is Phenylalanine--tRNA ligase alpha subunit from Xanthomonas oryzae pv. oryzae (strain MAFF 311018).